A 1352-amino-acid chain; its full sequence is Alpha-protein kinase 1 (1352 aa).

The region spanning Asp-7 to Asp-127 is the Arf-GAP domain. Residues Cys-25–Cys-48 form a C4-type zinc finger. 6 disordered regions span residues Leu-123–Asn-164, Thr-219–His-380, Gln-424–Pro-445, His-457–Ser-484, Phe-503–Ser-560, and Ile-619–Asn-658. Over residues Gly-237–Ser-246 the composition is skewed to polar residues. Low complexity-rich tracts occupy residues Asn-268 to Asn-287 and Asn-298 to Asn-318. 2 stretches are compositionally biased toward polar residues: residues Lys-329–Ser-352 and His-359–His-379. A coiled-coil region spans residues Thr-393–Ser-429. Composition is skewed to basic residues over residues Asn-458–Gln-470 and His-510–Ser-523. The span at Ile-619–Asn-636 shows a compositional bias: low complexity. Positions Tyr-689–Leu-781 form a coiled coil. Disordered regions lie at residues Pro-786–Asp-863 and Thr-901–Arg-979. Residues Pro-799–Tyr-812 are compositionally biased toward polar residues. Residues Gln-821 to Ser-859 show a composition bias toward low complexity. Pro residues predominate over residues Gln-906–Val-915. Over residues Gln-931 to Pro-965 the composition is skewed to low complexity. Residues Arg-990–Val-1194 form the Alpha-type protein kinase domain. Residue Gly-1164 to Gly-1169 participates in ATP binding. 2 disordered regions span residues Pro-1198–Phe-1234 and Gln-1279–Ser-1352. Residues His-1241–Gly-1320 are a coiled coil. A compositionally biased stretch (low complexity) spans Gln-1279–Asn-1319. Over residues His-1321–Pro-1332 the composition is skewed to pro residues. Over residues Gln-1334 to Ser-1352 the composition is skewed to basic and acidic residues.

It belongs to the protein kinase superfamily. Alpha-type protein kinase family. ALPK subfamily.

The chain is Alpha-protein kinase 1 (ak1) from Dictyostelium discoideum (Social amoeba).